Here is a 198-residue protein sequence, read N- to C-terminus: MQSLHLELTAGVDEAGRGPLAGPVVAAAVILDPSRPIDGLNDSKQLSAKRRDRLFDLIIERAAAYCIAEASVEEIDRLNILQATMLAMQRAIAGLSVTPQLVLIDGNRSPLLPMRSEAIVKGDARVTSIGAASILAKVHRDRLCAKLHETFPLYGFAVHKGYGTADHLAALVQHGACPEHRRTFSPVRAALARAAAHA.

The region spanning 7 to 196 (ELTAGVDEAG…VRAALARAAA (190 aa)) is the RNase H type-2 domain. A divalent metal cation-binding residues include Asp13, Glu14, and Asp105.

Belongs to the RNase HII family. Mn(2+) serves as cofactor. Requires Mg(2+) as cofactor.

The protein localises to the cytoplasm. The catalysed reaction is Endonucleolytic cleavage to 5'-phosphomonoester.. Functionally, endonuclease that specifically degrades the RNA of RNA-DNA hybrids. The protein is Ribonuclease HII 1 of Methylibium petroleiphilum (strain ATCC BAA-1232 / LMG 22953 / PM1).